Reading from the N-terminus, the 142-residue chain is HTH-type transcriptional regulator MntR (142 aa).

The HTH dtxR-type domain occupies 1-63 (MTTPSMEDYI…YEKYRGLVLT (63 aa)). Cd(2+)-binding residues include D8, E11, H77, E99, E102, and H103. Residues D8, E11, H77, E99, E102, and H103 each contribute to the Mn(2+) site.

This sequence belongs to the DtxR/MntR family. In terms of assembly, homodimer.

It is found in the cytoplasm. Its activity is regulated as follows. DNA binding is strongly activated by Mn(2+) and Cd(2+), but it is poorly activated by non-cognate metal cations, including Co(2+), Fe(2+), Ni(2+), Ca(2+) and Zn(2+). In the strict absence of divalent transition metal ions, MntR has a low affinity for DNA. Its function is as follows. Central regulator of manganese homeostasis that regulates the expression of both manganese uptake and efflux systems. In the presence of high levels of manganese, it mediates repression of the manganese uptake systems MntH and MntABCD and activation of the efflux systems MneP and MneS. Binds with high affinity to the regulatory regions of its target genes. The manganese concentration required for activation of efflux is higher than that for repression of uptake. This is HTH-type transcriptional regulator MntR from Bacillus subtilis (strain 168).